A 128-amino-acid polypeptide reads, in one-letter code: Small ribosomal subunit protein uS11 (128 aa).

This sequence belongs to the universal ribosomal protein uS11 family. In terms of assembly, part of the 30S ribosomal subunit. Interacts with proteins S7 and S18. Binds to IF-3.

In terms of biological role, located on the platform of the 30S subunit, it bridges several disparate RNA helices of the 16S rRNA. Forms part of the Shine-Dalgarno cleft in the 70S ribosome. This is Small ribosomal subunit protein uS11 from Synechococcus sp. (strain JA-3-3Ab) (Cyanobacteria bacterium Yellowstone A-Prime).